Consider the following 586-residue polypeptide: Arginine--tRNA ligase (586 aa).

Positions 127 to 137 match the 'HIGH' region motif; that stretch reads PNVAKEMHVGH.

It belongs to the class-I aminoacyl-tRNA synthetase family. Monomer.

It is found in the cytoplasm. The catalysed reaction is tRNA(Arg) + L-arginine + ATP = L-arginyl-tRNA(Arg) + AMP + diphosphate. This Streptomyces coelicolor (strain ATCC BAA-471 / A3(2) / M145) protein is Arginine--tRNA ligase (argS).